The primary structure comprises 211 residues: Ribosome maturation factor RimM (211 aa).

A PRC barrel domain is found at 111–182; it reads PDAWYDHQLV…TLVVTPPLGL (72 aa). The interval 184–211 is disordered; the sequence is EEIPDETPTAEPTPAEAAEPAPEGDDAR. Residues 189–204 show a composition bias toward low complexity; sequence ETPTAEPTPAEAAEPA.

Belongs to the RimM family. In terms of assembly, binds ribosomal protein uS19.

The protein localises to the cytoplasm. In terms of biological role, an accessory protein needed during the final step in the assembly of 30S ribosomal subunit, possibly for assembly of the head region. Essential for efficient processing of 16S rRNA. May be needed both before and after RbfA during the maturation of 16S rRNA. It has affinity for free ribosomal 30S subunits but not for 70S ribosomes. The protein is Ribosome maturation factor RimM of Clavibacter michiganensis subsp. michiganensis (strain NCPPB 382).